Consider the following 402-residue polypeptide: MDTKTFKRTLQHSENYNRKGFGHQAEVATQLQSEYQSSLIQEIRDRNYTLQRGDVTIRLAQAFGFCWGVERAVAMAYETRKHFPTERIWITNEIIHNPSVNQRMQEMQVGFIPVEAGNKDFSVVGNNDVVILPAFGASVQEMQLLSEKGCKIVDTTCPWVSKVWNTVEKHKKGDHTSIIHGKYKHEETIATSSFAGKYLIVLNLKEAQYVADYILHGRNREEFLQKFAKACSAGFDPDKDLERVGIANQTTMLKGETEQIGKLFEHTMLQKYGPVELNQHFQSFNTICDATQERQDAMLELVQENLDLMIVIGGFNSSNTTQLQQISQERGLPSYHIDVVERIKSVNSIEHRQLNGELVTTENWLPAGKIVVGVTSGASTPDKVVEDVIEKIFALKATTAVV.

Cysteine 66 contacts [4Fe-4S] cluster. A (2E)-4-hydroxy-3-methylbut-2-enyl diphosphate-binding site is contributed by histidine 96. Histidine 96 provides a ligand contact to dimethylallyl diphosphate. Histidine 96 lines the isopentenyl diphosphate pocket. Cysteine 157 contacts [4Fe-4S] cluster. Histidine 185 contributes to the (2E)-4-hydroxy-3-methylbut-2-enyl diphosphate binding site. Histidine 185 provides a ligand contact to dimethylallyl diphosphate. Histidine 185 contacts isopentenyl diphosphate. The Proton donor role is filled by glutamate 187. Threonine 250 is a (2E)-4-hydroxy-3-methylbut-2-enyl diphosphate binding site. Position 288 (cysteine 288) interacts with [4Fe-4S] cluster. Residues serine 317, serine 318, asparagine 319, and serine 379 each coordinate (2E)-4-hydroxy-3-methylbut-2-enyl diphosphate. Dimethylallyl diphosphate contacts are provided by serine 317, serine 318, asparagine 319, and serine 379. Isopentenyl diphosphate contacts are provided by serine 317, serine 318, asparagine 319, and serine 379.

This sequence belongs to the IspH family. [4Fe-4S] cluster serves as cofactor.

The catalysed reaction is isopentenyl diphosphate + 2 oxidized [2Fe-2S]-[ferredoxin] + H2O = (2E)-4-hydroxy-3-methylbut-2-enyl diphosphate + 2 reduced [2Fe-2S]-[ferredoxin] + 2 H(+). It carries out the reaction dimethylallyl diphosphate + 2 oxidized [2Fe-2S]-[ferredoxin] + H2O = (2E)-4-hydroxy-3-methylbut-2-enyl diphosphate + 2 reduced [2Fe-2S]-[ferredoxin] + 2 H(+). Its pathway is isoprenoid biosynthesis; dimethylallyl diphosphate biosynthesis; dimethylallyl diphosphate from (2E)-4-hydroxy-3-methylbutenyl diphosphate: step 1/1. The protein operates within isoprenoid biosynthesis; isopentenyl diphosphate biosynthesis via DXP pathway; isopentenyl diphosphate from 1-deoxy-D-xylulose 5-phosphate: step 6/6. Functionally, catalyzes the conversion of 1-hydroxy-2-methyl-2-(E)-butenyl 4-diphosphate (HMBPP) into a mixture of isopentenyl diphosphate (IPP) and dimethylallyl diphosphate (DMAPP). Acts in the terminal step of the DOXP/MEP pathway for isoprenoid precursor biosynthesis. This Trichormus variabilis (strain ATCC 29413 / PCC 7937) (Anabaena variabilis) protein is 4-hydroxy-3-methylbut-2-enyl diphosphate reductase.